Consider the following 399-residue polypeptide: Elongation factor Tu (399 aa).

Residues 10–209 (KPHVNIGTIG…KVDEYIPTPV (200 aa)) enclose the tr-type G domain. The tract at residues 19-26 (GHVDHGKT) is G1. Residue 19 to 26 (GHVDHGKT) participates in GTP binding. Position 26 (T26) interacts with Mg(2+). A G2 region spans residues 60–64 (GITIA). The tract at residues 81–84 (DCPG) is G3. GTP-binding positions include 81–85 (DCPGH) and 136–139 (NKAD). A G4 region spans residues 136–139 (NKAD). The tract at residues 174–176 (SAL) is G5.

The protein belongs to the TRAFAC class translation factor GTPase superfamily. Classic translation factor GTPase family. EF-Tu/EF-1A subfamily. In terms of assembly, monomer.

It localises to the cytoplasm. It carries out the reaction GTP + H2O = GDP + phosphate + H(+). In terms of biological role, GTP hydrolase that promotes the GTP-dependent binding of aminoacyl-tRNA to the A-site of ribosomes during protein biosynthesis. The polypeptide is Elongation factor Tu (Campylobacter curvus (strain 525.92)).